A 404-amino-acid polypeptide reads, in one-letter code: Peroxisomal biogenesis factor 9 (404 aa).

A run of 3 helical transmembrane segments spans residues 73–93 (FLFL…SLVF), 94–114 (LLGV…LLMG), and 149–169 (FGLD…FQVV). The interval 180–214 (DGQRSQQSQNSGMNVASSSRGRHQLVPDRPGSQLS) is disordered. The span at 181–198 (GQRSQQSQNSGMNVASSS) shows a compositional bias: polar residues. The chain crosses the membrane as a helical span at residues 349–369 (FFVGLVSWIVDETAACVVFCL).

Its subcellular location is the peroxisome membrane. Functionally, essential for the import of peroxisomal matrix proteins. This is Peroxisomal biogenesis factor 9 (PEX9) from Yarrowia lipolytica (strain CLIB 122 / E 150) (Yeast).